A 238-amino-acid polypeptide reads, in one-letter code: CD63 antigen (238 aa).

The Cytoplasmic segment spans residues 1–11 (MAVEGGMKCVK). A helical membrane pass occupies residues 12–32 (FLLYVLLLAFCACAVGLIAVG). Topologically, residues 33-51 (VGAQLVLSQTITHGATPGS) are extracellular. A helical membrane pass occupies residues 52 to 72 (LLPVVIIAVGAFLFLVAFVGC). Over 73-81 (CGTCKENYC) the chain is Cytoplasmic. The helical transmembrane segment at 82–102 (LMITFAIFLSLIMLVEVAAAI) threads the bilayer. The Extracellular portion of the chain corresponds to 103–203 (AGYVFRDKVM…KIGLWLRKNV (101 aa)). Residues N125, N130, N150, and N172 are each glycosylated (N-linked (GlcNAc...) asparagine). A helical membrane pass occupies residues 204–224 (LVVAAAALGIAFVEVLGIVFA). At 225-238 (CCLVKSIRSGYEVM) the chain is on the cytoplasmic side. The Lysosomal targeting motif motif lies at 234–238 (GYEVM).

It belongs to the tetraspanin (TM4SF) family. Interacts with TIMP1 and ITGB1 and recruits TIMP1 to ITGB1. Interacts with CD9. Identified in a complex with CD9 and ITGB3. Interacts with PMEL. Interacts with KDR/VEGFR2; identified in a complex with ITGB1 and KDR/VEGFR2 and is required to recruit KDR to ITGB1 complexes. Interacts with SYT7. In terms of processing, palmitoylated at a low, basal level in unstimulated platelets. The level of palmitoylation increases when platelets are activated by thrombin (in vitro).

The protein resides in the cell membrane. It localises to the lysosome membrane. Its subcellular location is the late endosome membrane. It is found in the endosome. The protein localises to the multivesicular body. The protein resides in the melanosome. It localises to the secreted. Its subcellular location is the extracellular exosome. It is found in the cell surface. Its function is as follows. Functions as a cell surface receptor for TIMP1 and plays a role in the activation of cellular signaling cascades. Plays a role in the activation of ITGB1 and integrin signaling, leading to the activation of AKT, FAK/PTK2 and MAP kinases. Promotes cell survival, reorganization of the actin cytoskeleton, cell adhesion, spreading and migration, via its role in the activation of AKT and FAK/PTK2. Plays a role in VEGFA signaling via its role in regulating the internalization of KDR/VEGFR2. Plays a role in intracellular vesicular transport processes, and is required for normal trafficking of the PMEL luminal domain that is essential for the development and maturation of melanocytes. Plays a role in the adhesion of leukocytes onto endothelial cells via its role in the regulation of SELP trafficking. May play a role in mast cell degranulation in response to Ms4a2/FceRI stimulation, but not in mast cell degranulation in response to other stimuli. The sequence is that of CD63 antigen (CD63) from Oryctolagus cuniculus (Rabbit).